The following is a 560-amino-acid chain: S100P-binding protein (560 aa).

Disordered regions lie at residues 259–292 and 313–400; these read SDIP…ESTP and SSSS…GKSF. The span at 313-352 shows a compositional bias: polar residues; sequence SSSSLQLPETSLASSTEPSPSLQLSASSVTAMNGQNNSNK. A compositionally biased stretch (basic and acidic residues) spans 378–387; the sequence is QKVEPKKNKP.

It is found in the nucleus. The polypeptide is S100P-binding protein (s100pbp) (Xenopus laevis (African clawed frog)).